Consider the following 305-residue polypeptide: Uracil-DNA glycosylase (305 aa).

The active-site Proton acceptor is the D148.

Belongs to the uracil-DNA glycosylase (UDG) superfamily. UNG family.

The protein resides in the host nucleus. The catalysed reaction is Hydrolyzes single-stranded DNA or mismatched double-stranded DNA and polynucleotides, releasing free uracil.. Excises uracil residues from the DNA which can arise as a result of misincorporation of dUMP residues by DNA polymerase or deamination of cytosines. Therefore may reduce deleterious uracil incorporation into the viral genome, particularly in terminally differentiated cells which lack DNA repair enzymes. The sequence is that of Uracil-DNA glycosylase from Varicella-zoster virus (strain Dumas) (HHV-3).